The sequence spans 325 residues: Glutarate 2-hydroxylase (325 aa).

Residues His-160, Asp-162, and His-292 each contribute to the Fe cation site.

Belongs to the glutarate hydroxylase family. Homotetramer. The cofactor is Fe(2+).

The enzyme catalyses glutarate + 2-oxoglutarate + O2 = (S)-2-hydroxyglutarate + succinate + CO2. It participates in amino-acid degradation. In terms of biological role, acts as an alpha-ketoglutarate-dependent dioxygenase catalyzing hydroxylation of glutarate (GA) to L-2-hydroxyglutarate (L2HG). Functions in a L-lysine degradation pathway that proceeds via cadaverine, glutarate and L-2-hydroxyglutarate. This Escherichia fergusonii (strain ATCC 35469 / DSM 13698 / CCUG 18766 / IAM 14443 / JCM 21226 / LMG 7866 / NBRC 102419 / NCTC 12128 / CDC 0568-73) protein is Glutarate 2-hydroxylase.